The chain runs to 880 residues: MKIFQIQCSSFKESRWQKSKCDNCLKFHIDINNNSKTSNTDTDFDANTNINSNINSNINSNININNSGNNNKNSNNIEITENIDNKAKIINKHIKTITNSKPIPIPIPTPTPISIKEKEKEKEKEKEKEKEKEKEKEKEMKSTINLRSEDTTSNKSTIVFTECLEYKGHQWRPNICVTCFSPKNKHKNVLPETSTPLISQSSQTSTITPSSSSTSTSTSSISTHKTANNKTVITYISSTTTTTTTSSSSSSPPSSSIAGITNPTSRSSSPILKSVPPSAYSNVVIPINNINNSNSNSSSGGGNNNNKSISTPSSPIISRPITNKINNNNNNNQPQLHYNQPQSSSVSTTSSPIIRPVLRRQFQSFPSNPKISKAILEQCNIINNNSNSNNSNNKDPVILCKYTIESQPKSNISVLKPTLVEFINQPDSKDDESSVKSPPLPVESQPIFNSKQSATMDGITTHKSVSITISTSTSPSSTTTTTSTTTSIIAEEPSSPILPTASPSSSSSSIITTATASTIPMSPSLPSIPFHEFETMESSTTTTLLSENNGGGGGSSCNDNSRRNSLNILPLRLKSFSFSAPQSDSMIEQPEDDPFFDFEDLSDDDDSNDNDDEELKEINGEKIIQQNDLTPTTTITSTTTILQSPTLEKTLSTTTTTTIPSPSTNSRSICNTLMDSTDSINNTNTNTNTNTNTNTNTNTNTNTNTNTNANINNKVSTTTTTTTTKRRSLKMDQFKEKEDEWDQGVDLTSFLKRKPTLQRDFSYCNNKVMEISSVKEEAKRLHGGTGYIHQFAFEAFKDILEAKQTQINRAFCSQKIDAPDCEMLINEINTAKKLLEDLLELNSNSSGSGNNSNDNSGSSSPSSSKTNTLNQQSICIKSEI.

Disordered regions lie at residues 101–149 (KPIP…LRSE), 191–224 (PETS…ISTH), 240–273 (TTTT…PILK), 294–350 (NSNS…STTS), 425–446 (QPDS…ESQP), 470–508 (STST…SSSS), 536–561 (MESS…NDNS), 580–613 (APQS…NDDE), 682–713 (NTNT…NINN), and 844–880 (NSSG…KSEI). The stretch at 113-147 (ISIKEKEKEKEKEKEKEKEKEKEKEKEMKSTINLR) forms a coiled coil. Positions 115 to 149 (IKEKEKEKEKEKEKEKEKEKEKEKEMKSTINLRSE) are enriched in basic and acidic residues. Composition is skewed to low complexity over residues 193–223 (TSTP…SIST) and 240–256 (TTTT…PSSS). A compositionally biased stretch (polar residues) spans 257-271 (IAGITNPTSRSSSPI). The segment covering 294–332 (NSNSSSGGGNNNNKSISTPSSPIISRPITNKINNNNNNN) has biased composition (low complexity). The span at 333–342 (QPQLHYNQPQ) shows a compositional bias: polar residues. A compositionally biased stretch (low complexity) spans 536 to 548 (MESSTTTTLLSEN). Positions 589 to 613 (QPEDDPFFDFEDLSDDDDSNDNDDE) are enriched in acidic residues. Low complexity predominate over residues 844 to 864 (NSSGSGNNSNDNSGSSSPSSS). Positions 865 to 880 (KTNTLNQQSICIKSEI) are enriched in polar residues.

This is an uncharacterized protein from Dictyostelium discoideum (Social amoeba).